The sequence spans 78 residues: Small ribosomal subunit protein bS16 (78 aa).

It belongs to the bacterial ribosomal protein bS16 family.

The protein is Small ribosomal subunit protein bS16 of Maridesulfovibrio salexigens (strain ATCC 14822 / DSM 2638 / NCIMB 8403 / VKM B-1763) (Desulfovibrio salexigens).